The primary structure comprises 463 residues: Xanthine permease XanP (463 aa).

The next 12 membrane-spanning stretches (helical) occupy residues 43 to 63 (LLAM…ALGL), 71 to 91 (IISM…KAWG), 93 to 113 (VGSG…PLIM), 126 to 146 (PTMM…EMVI), 156 to 176 (IITP…LIQV), 192 to 212 (TFGA…IILL), 222 to 242 (VASL…MGML), 260 to 280 (LYYG…VFMI), 352 to 372 (GFVV…SGFV), 379 to 399 (VLGG…VRIV), 409 to 429 (ILII…PLIL), and 439 to 459 (LLSS…LIFP).

It belongs to the nucleobase:cation symporter-2 (NCS2) (TC 2.A.40) family.

The protein localises to the cell inner membrane. It catalyses the reaction xanthine(in) + H(+)(in) = xanthine(out) + H(+)(out). Functionally, specific, proton motive force-dependent high-affinity transporter for xanthine. The chain is Xanthine permease XanP (xanP) from Escherichia coli O6:H1 (strain CFT073 / ATCC 700928 / UPEC).